A 138-amino-acid chain; its full sequence is Transcription antitermination protein NusB (138 aa).

This sequence belongs to the NusB family.

Functionally, involved in transcription antitermination. Required for transcription of ribosomal RNA (rRNA) genes. Binds specifically to the boxA antiterminator sequence of the ribosomal RNA (rrn) operons. The chain is Transcription antitermination protein NusB from Photorhabdus laumondii subsp. laumondii (strain DSM 15139 / CIP 105565 / TT01) (Photorhabdus luminescens subsp. laumondii).